The chain runs to 100 residues: ESAT-6-like protein EsxT (100 aa).

The protein belongs to the WXG100 family. ESAT-6 subfamily. As to quaternary structure, forms a tight 1:1 complex with EsxU.

It localises to the secreted. The polypeptide is ESAT-6-like protein EsxT (Mycobacterium tuberculosis (strain CDC 1551 / Oshkosh)).